Here is a 385-residue protein sequence, read N- to C-terminus: MKLPSLLSLGVAASTTIVAAVPDQKPIGDTIEDVHLGKFLIELGPGDTRWVTEEEKWGLRRDGRRFFDITAEAEQNVFPKTFAQTTVTFPSELQNVAHVKKLASSLSKNRLQTFLTKFTSFHTRYYKSESGRQSAIWLFEQIEKIIQESSATGARVEKFEHPWGQFSIIATIPGQTNKTVVVGAHQDSINLLMPSILPAPGADDDGSGTATILEALRILLKSEAVAQGKAPNTVEFHWYSAEEAGLLGSQAVFAQYKQDNRDVKSMLQQDMTGYSKGTMNAGHVDSVGIITDFVDEGLTNFITKVVTGYCGISYVLTKCGYACSDHASASRYGYPSAFVIESKFEYSSKLIHTTRDEVSSLDFDHMLQHAKMTLGLVYELAFADL.

Positions 1-20 are cleaved as a signal peptide; that stretch reads MKLPSLLSLGVAASTTIVAA. Positions 21 to 87 are excised as a propeptide; it reads VPDQKPIGDT…FPKTFAQTTV (67 aa). An N-linked (GlcNAc...) asparagine glycan is attached at Asn-177. Zn(2+) contacts are provided by His-185, Asp-204, Glu-243, and Asp-270. Cys-319 and Cys-323 are oxidised to a cystine. His-352 is a Zn(2+) binding site.

Belongs to the peptidase M28 family. M28E subfamily. Monomer. Zn(2+) serves as cofactor.

It localises to the secreted. Functionally, extracellular aminopeptidase that allows assimilation of proteinaceous substrates. The polypeptide is Leucine aminopeptidase 1 (LAP1) (Ajellomyces capsulatus (strain NAm1 / WU24) (Darling's disease fungus)).